We begin with the raw amino-acid sequence, 316 residues long: Ribose-phosphate pyrophosphokinase (316 aa).

Residues Asp-39–Glu-41 and Arg-98–Gln-99 each bind ATP. 2 residues coordinate Mg(2+): His-133 and Asp-172. Lys-195 is an active-site residue. Residues Arg-197, Asp-221, and Asp-225–Thr-229 each bind D-ribose 5-phosphate.

Belongs to the ribose-phosphate pyrophosphokinase family. Class I subfamily. In terms of assembly, homohexamer. Requires Mg(2+) as cofactor.

Its subcellular location is the cytoplasm. It catalyses the reaction D-ribose 5-phosphate + ATP = 5-phospho-alpha-D-ribose 1-diphosphate + AMP + H(+). It functions in the pathway metabolic intermediate biosynthesis; 5-phospho-alpha-D-ribose 1-diphosphate biosynthesis; 5-phospho-alpha-D-ribose 1-diphosphate from D-ribose 5-phosphate (route I): step 1/1. Functionally, involved in the biosynthesis of the central metabolite phospho-alpha-D-ribosyl-1-pyrophosphate (PRPP) via the transfer of pyrophosphoryl group from ATP to 1-hydroxyl of ribose-5-phosphate (Rib-5-P). This Nitrosomonas europaea (strain ATCC 19718 / CIP 103999 / KCTC 2705 / NBRC 14298) protein is Ribose-phosphate pyrophosphokinase.